Reading from the N-terminus, the 638-residue chain is Chaperone protein DnaK (638 aa).

Residue Thr-199 is modified to Phosphothreonine; by autocatalysis. The disordered stretch occupies residues 600–638 (EINQKKSEENLKKEDTSSESKKDENVVDAEFEEIKDPKK). Basic and acidic residues predominate over residues 602 to 624 (NQKKSEENLKKEDTSSESKKDEN).

The protein belongs to the heat shock protein 70 family.

Acts as a chaperone. The sequence is that of Chaperone protein DnaK from Buchnera aphidicola subsp. Schizaphis graminum (strain Sg).